We begin with the raw amino-acid sequence, 622 residues long: Telomerase-associated protein of 75 kDa (622 aa).

Component of the telomerase holoenzyme complex, composed of the catalytic core (the catalytic subunit TERT, the telomerase RNA template component TER and TAP65/p65), which is associated with two heterotrimeric subcomplexes: (i) the replication protein A (RPA)-related subcomplex, composed of TEB1, RPA2/TEB2 and RPA3/TEB3 and (ii) the CST-like subcomplex, composed of TAP75/p75, TAP45/p45 and TAP19/p19. TEB1 and the CST-like subcomplex are tethered to the catalytic core by TAP50/p50.

It localises to the chromosome. The protein localises to the telomere. Its function is as follows. Component of a CST-like subcomplex of the holoenzyme telomerase ribonucleoprotein complex, which stimulates telomerase complementary-strand synthesis. Telomerase is an essential ribonucleoprotein enzyme that copies new telomeric repeats onto chromosome ends by repetitively synthesizing the short telomere-repeat sequence 5'-TTGGGG-3' using an RNA template component TER. The CST-like subcomplex (also named 7-4-1) binds telomeric single-stranded DNA and coordinates telomere G-strand and C-strand synthesis. This chain is Telomerase-associated protein of 75 kDa, found in Tetrahymena thermophila (strain SB210).